The sequence spans 242 residues: uncharacterized protein (242 aa).

In terms of domain architecture, HTH gntR-type spans 17-85 (QRVDERIATT…HGSGSVVRDP (69 aa)). A DNA-binding region (H-T-H motif) is located at residues 45–64 (ERDLAERLGVNRTSLRQGLA).

This is an uncharacterized protein from Mycobacterium tuberculosis (strain ATCC 25618 / H37Rv).